The following is a 639-amino-acid chain: Uridine permease (639 aa).

A disordered region spans residues 1-37 (MPVSDSGFDNSSKTMKDDTIPTEDYEEITKESEMGDA). Over 1–162 (MPVSDSGFDN…LQLGLNWWQT (162 aa)) the chain is Cytoplasmic. Residue T54 is modified to Phosphothreonine. Position 56 is a phosphoserine (S56). The chain crosses the membrane as a helical span at residues 163-180 (WICIWVGYTFVAFFLILG). Residues 181–200 (SKVGNNYHISFPISSRVSFG) are Extracellular-facing. Residues 201–225 (IYFSIWIVINRVVMACVWNSTLAYI) traverse the membrane as a helical segment. Over 226–259 (GSQCVQLMLKAIFGTNLNTRIKDTIKNPNLTNFE) the chain is Cytoplasmic. A helical membrane pass occupies residues 260-276 (FMCFMVFWVACLPFLWF). Residues 277 to 283 (PPDKLRH) are Extracellular-facing. The chain crosses the membrane as a helical span at residues 284 to 305 (IFALKSAITPFAAFGFLIWTLC). Over 306-367 (KAKGHLALGS…KTYKSSVYSQ (62 aa)) the chain is Cytoplasmic. Residues 368 to 392 (LIALPVCYAIISLIGILSVSAAYTL) traverse the membrane as a helical segment. Topologically, residues 393-416 (YGVNYWSPLDILNRYLDNYTSGNR) are extracellular. Residues 417–435 (AGVFLISFIFAFDQLGANL) form a helical membrane-spanning segment. At 436 to 460 (SGNSIPAGTDLTALLPKFINIRRGS) the chain is on the cytoplasmic side. The helical transmembrane segment at 461-477 (YICALISLAICPWDLLS) threads the bilayer. The Extracellular portion of the chain corresponds to 478 to 483 (SSSKFT). A helical transmembrane segment spans residues 484–507 (TALAAYAVFLSAIAGVISADYFIV). The Cytoplasmic segment spans residues 508–537 (RKGYVNIFHCYTDKPGSYYMYNKYGTNWRA). Residues 538–562 (VVAYIFGIAPNFAGFLGSVGVSVPI) form a helical membrane-spanning segment. At 563–572 (GAMKVYYLNY) the chain is on the extracellular side. Residues 573–590 (FVGYLLAALSYCILVYFY) form a helical membrane-spanning segment. At 591–639 (PIKGIPGDAKITDRKWLEEWVEVEEFGTEREAFEEYGGVSTGYEKIRYI) the chain is on the cytoplasmic side. A Glycyl lysine isopeptide (Lys-Gly) (interchain with G-Cter in ubiquitin) cross-link involves residue K635.

This sequence belongs to the purine-cytosine permease (2.A.39) family.

The protein resides in the membrane. Its function is as follows. High-affinity transport of uridine. This is Uridine permease (FUI1) from Saccharomyces cerevisiae (strain ATCC 204508 / S288c) (Baker's yeast).